Reading from the N-terminus, the 354-residue chain is UDP-N-acetylglucosamine--N-acetylmuramyl-(pentapeptide) pyrophosphoryl-undecaprenol N-acetylglucosamine transferase (354 aa).

UDP-N-acetyl-alpha-D-glucosamine contacts are provided by residues 11 to 13 (TAG), R164, S194, and Q289.

This sequence belongs to the glycosyltransferase 28 family. MurG subfamily.

Its subcellular location is the cell membrane. The enzyme catalyses di-trans,octa-cis-undecaprenyl diphospho-N-acetyl-alpha-D-muramoyl-L-alanyl-D-glutamyl-meso-2,6-diaminopimeloyl-D-alanyl-D-alanine + UDP-N-acetyl-alpha-D-glucosamine = di-trans,octa-cis-undecaprenyl diphospho-[N-acetyl-alpha-D-glucosaminyl-(1-&gt;4)]-N-acetyl-alpha-D-muramoyl-L-alanyl-D-glutamyl-meso-2,6-diaminopimeloyl-D-alanyl-D-alanine + UDP + H(+). Its pathway is cell wall biogenesis; peptidoglycan biosynthesis. In terms of biological role, cell wall formation. Catalyzes the transfer of a GlcNAc subunit on undecaprenyl-pyrophosphoryl-MurNAc-pentapeptide (lipid intermediate I) to form undecaprenyl-pyrophosphoryl-MurNAc-(pentapeptide)GlcNAc (lipid intermediate II). The protein is UDP-N-acetylglucosamine--N-acetylmuramyl-(pentapeptide) pyrophosphoryl-undecaprenol N-acetylglucosamine transferase of Clostridium botulinum (strain Loch Maree / Type A3).